We begin with the raw amino-acid sequence, 242 residues long: tRNA (guanine-N(1)-)-methyltransferase (242 aa).

S-adenosyl-L-methionine is bound by residues G111 and 130–135 (IGDYVL).

Belongs to the RNA methyltransferase TrmD family. In terms of assembly, homodimer.

The protein resides in the cytoplasm. It catalyses the reaction guanosine(37) in tRNA + S-adenosyl-L-methionine = N(1)-methylguanosine(37) in tRNA + S-adenosyl-L-homocysteine + H(+). Specifically methylates guanosine-37 in various tRNAs. This Aster yellows witches'-broom phytoplasma (strain AYWB) protein is tRNA (guanine-N(1)-)-methyltransferase.